We begin with the raw amino-acid sequence, 233 residues long: Apoptosis regulator Bcl-2 (233 aa).

Residues 10–30 carry the BH4 motif; sequence DNREIVLKYIHYKLSQRGYDW. The interval 32 to 86 is disordered; sequence AGEDRPPVPPAPAPAAAPAAVAAAGASSHHRPEPPGSAAASEVPPAEGLRPAPPG. The short motif at 87–101 is the BH3 element; it reads VHLALRQAGDEFSRR. The BH1 signature appears at 130–149; that stretch reads ELFRDGVNWGRIVAFFEFGG. The BH2 signature appears at 181-196; sequence NWIQDNGGWDAFVELY. A helical membrane pass occupies residues 208-228; that stretch reads WISLKTILSLVLVGACITLGA.

This sequence belongs to the Bcl-2 family. Forms homodimers, and heterodimers with BAX, BAD, BAK and Bcl-X(L). Heterodimerization with BAX requires intact BH1 and BH2 motifs, and is necessary for anti-apoptotic activity. Also interacts with APAF1 and RAF-1. In adult chicken expressed, in thymus, spleen, kidney, heart, ovary and brain, with the highest levels in the thymus. In the embryo, highly levels expressed in all tissues with high levels in the bursa of Fabricius.

It is found in the mitochondrion outer membrane. The protein resides in the nucleus membrane. Its subcellular location is the endoplasmic reticulum membrane. The protein localises to the cytoplasm. Suppresses apoptosis in a variety of cell systems including factor-dependent lymphohematopoietic and neural cells. Regulates cell death by controlling the mitochondrial membrane permeability. Appears to function in a feedback loop system with caspases. Inhibits caspase activity either by preventing the release of cytochrome c from the mitochondria and/or by binding to the apoptosis-activating factor (APAF-1). The sequence is that of Apoptosis regulator Bcl-2 (BCL2) from Gallus gallus (Chicken).